The sequence spans 357 residues: AA9 family lytic polysaccharide monooxygenase B (357 aa).

Positions 1 to 18 (MKFSSVLALAASAKLVAS) are cleaved as a signal peptide. Cu(2+) is bound by residues H19 and H101. A catalytic region spans residues 19–234 (HATVFAVWIN…IPGPAVWDGA (216 aa)). Residues C61 and C182 are joined by a disulfide bond. Positions 168 and 177 each coordinate O2. Cu(2+) is bound at residue Y179. Positions 235 to 318 (SSGSGSSGSG…SAAPTGGTGT (84 aa)) are ser/Thr-rich linker. A disordered region spans residues 292 to 317 (SVRPTTSAAPTTSAPTSSAAPTGGTG). Residues 295–313 (PTTSAAPTTSAPTSSAAPT) are compositionally biased toward low complexity. The region spanning 319–355 (GSIQIYQQCGGMNYKGATGCASGLTCKQWNPYYHQCV) is the CBM1 domain.

This sequence belongs to the polysaccharide monooxygenase AA9 family. Cu(2+) serves as cofactor.

Its subcellular location is the secreted. The catalysed reaction is [(1-&gt;4)-beta-D-glucosyl]n+m + reduced acceptor + O2 = 4-dehydro-beta-D-glucosyl-[(1-&gt;4)-beta-D-glucosyl]n-1 + [(1-&gt;4)-beta-D-glucosyl]m + acceptor + H2O.. Its function is as follows. Lytic polysaccharide monooxygenase (LPMO) that depolymerizes crystalline and amorphous polysaccharides via the oxidation of scissile alpha- or beta-(1-4)-glycosidic bonds, yielding C4 oxidation products. Catalysis by LPMOs requires the reduction of the active-site copper from Cu(II) to Cu(I) by a reducing agent and H(2)O(2) or O(2) as a cosubstrate. Active on carboxymethylcellulose (CMC), hydroxyethylcellulose (HEC) and beta-glucan. Also active on soluble cellohexaose, a property that is restricted to only a few characterized LPMOs. The protein is AA9 family lytic polysaccharide monooxygenase B of Emericella nidulans (strain FGSC A4 / ATCC 38163 / CBS 112.46 / NRRL 194 / M139) (Aspergillus nidulans).